Here is a 432-residue protein sequence, read N- to C-terminus: Histidine--tRNA ligase (432 aa).

The protein belongs to the class-II aminoacyl-tRNA synthetase family. As to quaternary structure, homodimer.

It is found in the cytoplasm. It carries out the reaction tRNA(His) + L-histidine + ATP = L-histidyl-tRNA(His) + AMP + diphosphate + H(+). This Symbiobacterium thermophilum (strain DSM 24528 / JCM 14929 / IAM 14863 / T) protein is Histidine--tRNA ligase.